The primary structure comprises 64 residues: Large ribosomal subunit protein bL35c (64 aa).

Belongs to the bacterial ribosomal protein bL35 family.

It localises to the plastid. The protein resides in the chloroplast. This chain is Large ribosomal subunit protein bL35c, found in Trieres chinensis (Marine centric diatom).